We begin with the raw amino-acid sequence, 203 residues long: Linker for activation of T-cells family member 2 (203 aa).

Topologically, residues Met-1–Glu-6 are extracellular. Residues Leu-7–Val-27 form a helical; Signal-anchor for type III membrane protein membrane-spanning segment. S-palmitoyl cysteine attachment occurs at residues Cys-26 and Cys-29. The Cytoplasmic portion of the chain corresponds to His-28–Ile-203. At Tyr-59 the chain carries Phosphotyrosine. Phosphoserine is present on residues Ser-60 and Ser-95. Tyr-139, Tyr-160, and Tyr-192 each carry phosphotyrosine. A disordered region spans residues Glu-171–Ile-203.

When phosphorylated, interacts with GRB2. May also interact with SOS1, GAB1 and CBL. In terms of processing, phosphorylated on tyrosines following cross-linking of BCR in B-cells, high affinity IgG receptor (FCGR1) in myeloid cells, or high affinity IgE receptor (FCER1) in mast cells; which induces the recruitment of GRB2. As to expression, strongly expressed in testis. Expressed in heart, spleen and lung. Present in B-cells and mast cells (at protein level).

The protein localises to the cell membrane. In terms of biological role, involved in FCER1 (high affinity immunoglobulin epsilon receptor)-mediated signaling in mast cells. May also be involved in BCR (B-cell antigen receptor)-mediated signaling in B-cells and FCGR1 (high affinity immunoglobulin gamma Fc receptor I)-mediated signaling in myeloid cells. Couples activation of these receptors and their associated kinases with distal intracellular events through the recruitment of GRB2. This chain is Linker for activation of T-cells family member 2 (Lat2), found in Mus musculus (Mouse).